A 790-amino-acid chain; its full sequence is Polyribonucleotide nucleotidyltransferase (790 aa).

Mg(2+) contacts are provided by Asp498 and Asp504. The 60-residue stretch at 565 to 624 (PRILRIKIKPEQIGEVIGPGGRVIRAIQEQTGTKISIEEDGTVFISAANEDAARRAVREI) folds into the KH domain. The 69-residue stretch at 634–702 (GEIFYGRVVT…PDGKINLSRK (69 aa)) folds into the S1 motif domain. Residues 710–790 (AERAATAQAP…KELLGEDEPN (81 aa)) form a disordered region. The span at 739–755 (PERRPGPPTPRRPEQRG) shows a compositional bias: basic and acidic residues. The span at 757–772 (SRPPRPQAQRSTPPPG) shows a compositional bias: pro residues.

It belongs to the polyribonucleotide nucleotidyltransferase family. Mg(2+) is required as a cofactor.

Its subcellular location is the cytoplasm. The enzyme catalyses RNA(n+1) + phosphate = RNA(n) + a ribonucleoside 5'-diphosphate. Functionally, involved in mRNA degradation. Catalyzes the phosphorolysis of single-stranded polyribonucleotides processively in the 3'- to 5'-direction. The protein is Polyribonucleotide nucleotidyltransferase of Thermomicrobium roseum (strain ATCC 27502 / DSM 5159 / P-2).